Consider the following 2149-residue polypeptide: Non-reducing polyketide synthase PvBS090_009107 (2149 aa).

Positions 8-244 are N-terminal acylcarrier protein transacylase domain (SAT); that stretch reads YLFGDQTGEF…VRVPVHAPYH (237 aa). The Ketosynthase family 3 (KS3) domain occupies 375–806; it reads QSKIAIIGLS…GGNTALLIED (432 aa). Residues Cys-547, His-682, and His-724 each act as for beta-ketoacyl synthase activity in the active site. The malonyl-CoA:ACP transacylase (MAT) domain stretch occupies residues 911–1231; it reads FVFTGQGAQY…LSAIYLAGVD (321 aa). Ser-1000 (for acyl/malonyl transferase activity) is an active-site residue. A product template (PT) domain region spans residues 1290–1604; that stretch reads TTSVQRIVET…RQVLNTVLPP (315 aa). The N-terminal hotdog fold stretch occupies residues 1294–1426; that stretch reads QRIVETRDEG…CLVKFSDTHL (133 aa). In terms of domain architecture, PKS/mFAS DH spans 1294–1599; that stretch reads QRIVETRDEG…FQGVPRQVLN (306 aa). His-1326 functions as the Proton acceptor; for dehydratase activity in the catalytic mechanism. The segment at 1454–1599 is C-terminal hotdog fold; the sequence is SHRMHRGMFY…FQGVPRQVLN (146 aa). Asp-1512 serves as the catalytic Proton donor; for dehydratase activity. A disordered region spans residues 1604 to 1631; it reads PAGGSKAAPRTTARAVPPPPINVEKPKS. The 78-residue stretch at 1649-1726 folds into the Carrier 1 domain; sequence SAGPSVLVQA…DLKQLLSQAS (78 aa). Ser-1686 is subject to O-(pantetheine 4'-phosphoryl)serine. 2 stretches are compositionally biased toward low complexity: residues 1722–1731 and 1744–1755; these read LSQASPSDSS and SSSTEPSTPGTP. A disordered region spans residues 1722–1763; it reads LSQASPSDSSDSSEESHYSFRDSSSTEPSTPGTPAFFSPKRG. The 78-residue stretch at 1769–1846 folds into the Carrier 2 domain; the sequence is VGESETIKTI…AVETALDLKP (78 aa). Ser-1806 carries the post-translational modification O-(pantetheine 4'-phosphoryl)serine. The thioesterase (TE) domain stretch occupies residues 1875–2147; that stretch reads STHPPATSIL…KLSAFIGRAM (273 aa). The active-site For thioesterase activity is the Ser-1965.

The catalysed reaction is 6 malonyl-CoA + acetyl-CoA + 6 H(+) = naphtopyrone YWA1 + 6 CO2 + 7 CoA + H2O. Its pathway is secondary metabolite biosynthesis. It functions in the pathway pigment biosynthesis. Functionally, non-reducing polyketide synthase; part of the gene cluster 24 that mediates the biosynthesis of a pigment with an aromatic structure protecting the pigmented fungus from both ionizing and non-ionizing radiations based on a mechanism similar to melanin, that is, free radical quenching and spherical spatial arrangement. Catalyzes the biosynthesis of the gamma-naphthopyrone precursor YWA1, via condensation of one acetyl-CoA starter unit with 6 malonyl-CoA units. YWA1 is probably further processed by the additional enzymes present within the cluster 24, however these additional steps have not been characterized yet. YWA1 is not converted to DHN-melanin in Byssochlamys spectabilis since the use of the DHN-melanin pathway inhibitor pyroquilon does not result in a loss of pigmentation. The protein is Non-reducing polyketide synthase PvBS090_009107 of Byssochlamys spectabilis (Paecilomyces variotii).